Here is a 775-residue protein sequence, read N- to C-terminus: Ubiquitin carboxyl-terminal hydrolase 14 (775 aa).

The segment at 1-108 (MSCPHLTETN…EDLYDYFYVP (108 aa)) adopts a UBP-type 1; degenerate zinc-finger fold. Zn(2+) is bound by residues Cys-25, Cys-28, Cys-41, Cys-44, Cys-49, His-56, His-60, His-66, Cys-153, His-155, Cys-174, Cys-177, Cys-186, Cys-189, Cys-194, His-207, His-211, His-217, Cys-236, and Cys-239. A UBP-type 2 zinc finger spans residues 151–259 (TTCDHIINLP…THMLNFGIDI (109 aa)). Positions 300 to 774 (TGLKNLGNSC…TGYVYLFERL (475 aa)) constitute a USP domain. The active-site Nucleophile is Cys-309. Residue Ser-456 is modified to Phosphoserine. UBA domains follow at residues 576–617 (EWNQ…LFEH) and 639–679 (SVSE…ILNH). His-730 (proton acceptor) is an active-site residue.

This sequence belongs to the peptidase C19 family.

It carries out the reaction Thiol-dependent hydrolysis of ester, thioester, amide, peptide and isopeptide bonds formed by the C-terminal Gly of ubiquitin (a 76-residue protein attached to proteins as an intracellular targeting signal).. The sequence is that of Ubiquitin carboxyl-terminal hydrolase 14 (ubp14) from Schizosaccharomyces pombe (strain 972 / ATCC 24843) (Fission yeast).